A 193-amino-acid chain; its full sequence is MEDSLLEIMTKDGGDMPAPLEVSTVPAVGDVISGEYNGGMKELMEHLKAQLQALFEDVRAMRGALDEQASHIQVLSDDVCANQRAIVSMCQIMTTAPRQGGLGVAGGKGSFPSVPHEPETPSPGIGDSGLLGRDPDEEDEEEEEEKETASPATPTSHCERSESPGLLGENGPLVEPLDLPDITLLQLEGEASL.

Residues 39–68 are a coiled coil; that stretch reads GMKELMEHLKAQLQALFEDVRAMRGALDEQ. The interval 101–176 is disordered; it reads GLGVAGGKGS…LGENGPLVEP (76 aa). Residues 135–146 are compositionally biased toward acidic residues; that stretch reads PDEEDEEEEEEK.

This chain is Coiled-coil domain-containing protein 184 (Ccdc184), found in Rattus norvegicus (Rat).